We begin with the raw amino-acid sequence, 235 residues long: Phosphoribosylaminoimidazole-succinocarboxamide synthase (235 aa).

Belongs to the SAICAR synthetase family.

The catalysed reaction is 5-amino-1-(5-phospho-D-ribosyl)imidazole-4-carboxylate + L-aspartate + ATP = (2S)-2-[5-amino-1-(5-phospho-beta-D-ribosyl)imidazole-4-carboxamido]succinate + ADP + phosphate + 2 H(+). It functions in the pathway purine metabolism; IMP biosynthesis via de novo pathway; 5-amino-1-(5-phospho-D-ribosyl)imidazole-4-carboxamide from 5-amino-1-(5-phospho-D-ribosyl)imidazole-4-carboxylate: step 1/2. In Caldanaerobacter subterraneus subsp. tengcongensis (strain DSM 15242 / JCM 11007 / NBRC 100824 / MB4) (Thermoanaerobacter tengcongensis), this protein is Phosphoribosylaminoimidazole-succinocarboxamide synthase.